The following is a 675-amino-acid chain: Acetyl-coenzyme A synthetase 1 (675 aa).

Residues 1 to 10 (MPESTQQSHL) are compositionally biased toward polar residues. A disordered region spans residues 1–32 (MPESTQQSHLSLDHEKMQQPPKGFTERSKTKP). Residues 212 to 215 (RGGK) and Thr331 each bind CoA. ATP contacts are provided by residues 407 to 409 (GEP), 431 to 436 (DTYWQT), Asp522, and Arg537. A CoA-binding site is contributed by Ser545. Arg548 contributes to the ATP binding site. Residue Arg609 participates in CoA binding.

The protein belongs to the ATP-dependent AMP-binding enzyme family.

It catalyses the reaction acetate + ATP + CoA = acetyl-CoA + AMP + diphosphate. The polypeptide is Acetyl-coenzyme A synthetase 1 (ACS1) (Candida albicans (Yeast)).